Here is a 353-residue protein sequence, read N- to C-terminus: Photosystem II protein D1 (353 aa).

Thr-2 carries the post-translational modification N-acetylthreonine. Thr-2 is modified (phosphothreonine). A run of 3 helical transmembrane segments spans residues 29 to 46 (YIGWFGVLMIPTLLTATS), 118 to 133 (HFLLGVACYMGREWEL), and 142 to 156 (WIAVAYSAPVAAATA). His-118 provides a ligand contact to chlorophyll a. Tyr-126 provides a ligand contact to pheophytin a. Positions 170 and 189 each coordinate [CaMn4O5] cluster. A helical membrane pass occupies residues 197-218 (FHMLGVAGVFGGSLFSAMHGSL). His-198 contacts chlorophyll a. Residues His-215 and 264 to 265 (SF) each bind a quinone. Residue His-215 participates in Fe cation binding. A Fe cation-binding site is contributed by His-272. The chain crosses the membrane as a helical span at residues 274 to 288 (FLAAWPVVGIWFTAL). [CaMn4O5] cluster contacts are provided by His-332, Glu-333, Asp-342, and Ala-344. Residues 345–353 (AMEAPSVNG) constitute a propeptide that is removed on maturation.

It belongs to the reaction center PufL/M/PsbA/D family. As to quaternary structure, PSII is composed of 1 copy each of membrane proteins PsbA, PsbB, PsbC, PsbD, PsbE, PsbF, PsbH, PsbI, PsbJ, PsbK, PsbL, PsbM, PsbT, PsbX, PsbY, PsbZ, Psb30/Ycf12, at least 3 peripheral proteins of the oxygen-evolving complex and a large number of cofactors. It forms dimeric complexes. The D1/D2 heterodimer binds P680, chlorophylls that are the primary electron donor of PSII, and subsequent electron acceptors. It shares a non-heme iron and each subunit binds pheophytin, quinone, additional chlorophylls, carotenoids and lipids. D1 provides most of the ligands for the Mn4-Ca-O5 cluster of the oxygen-evolving complex (OEC). There is also a Cl(-1) ion associated with D1 and D2, which is required for oxygen evolution. The PSII complex binds additional chlorophylls, carotenoids and specific lipids. is required as a cofactor. Post-translationally, tyr-161 forms a radical intermediate that is referred to as redox-active TyrZ, YZ or Y-Z. C-terminally processed by CTPA; processing is essential to allow assembly of the oxygen-evolving complex and thus photosynthetic growth.

It is found in the plastid. Its subcellular location is the chloroplast thylakoid membrane. It carries out the reaction 2 a plastoquinone + 4 hnu + 2 H2O = 2 a plastoquinol + O2. Functionally, photosystem II (PSII) is a light-driven water:plastoquinone oxidoreductase that uses light energy to abstract electrons from H(2)O, generating O(2) and a proton gradient subsequently used for ATP formation. It consists of a core antenna complex that captures photons, and an electron transfer chain that converts photonic excitation into a charge separation. The D1/D2 (PsbA/PsbD) reaction center heterodimer binds P680, the primary electron donor of PSII as well as several subsequent electron acceptors. This chain is Photosystem II protein D1, found in Phaseolus vulgaris (Kidney bean).